The primary structure comprises 66 residues: KEGYPVDWGNCKYECMSDAYCKDLCVDRKAKSGYCYKLNWFCYCEGLPDDSPIKTNGHCRPGGRRK.

Residues 1–60 (KEGYPVDWGNCKYECMSDAYCKDLCVDRKAKSGYCYKLNWFCYCEGLPDDSPIKTNGHCR) form the LCN-type CS-alpha/beta domain. 4 disulfide bridges follow: cysteine 11-cysteine 59, cysteine 15-cysteine 35, cysteine 21-cysteine 42, and cysteine 25-cysteine 44.

Belongs to the long (4 C-C) scorpion toxin superfamily. Sodium channel inhibitor family. Alpha subfamily. As to expression, expressed by the venom gland.

The protein localises to the secreted. Alpha toxins bind voltage-independently at site-3 of sodium channels (Nav) and inhibits the inactivation of the activated channels, thereby blocking neuronal transmission. In Rhopalurus junceus (Caribbean blue scorpion), this protein is Putative alpha-neurotoxin RjAa16.